We begin with the raw amino-acid sequence, 668 residues long: UvrABC system protein B (668 aa).

A Helicase ATP-binding domain is found at 25–414; the sequence is RGLHAGARFQ…IVEQLIRPTG (390 aa). Position 38–45 (38–45) interacts with ATP; sequence GVTGSGKT. Residues 91-114 carry the Beta-hairpin motif; it reads YYDYYQPESYVPARDLYIEKDASI. The Helicase C-terminal domain maps to 431–594; sequence DICQRVKACS…TIKKSIEDIL (164 aa). Positions 627–662 constitute a UVR domain; sequence KKMVQALRLHMKVCARELRFEEAALIRDKILQLQRQ.

The protein belongs to the UvrB family. As to quaternary structure, forms a heterotetramer with UvrA during the search for lesions. Interacts with UvrC in an incision complex.

Its subcellular location is the cytoplasm. In terms of biological role, the UvrABC repair system catalyzes the recognition and processing of DNA lesions. A damage recognition complex composed of 2 UvrA and 2 UvrB subunits scans DNA for abnormalities. Upon binding of the UvrA(2)B(2) complex to a putative damaged site, the DNA wraps around one UvrB monomer. DNA wrap is dependent on ATP binding by UvrB and probably causes local melting of the DNA helix, facilitating insertion of UvrB beta-hairpin between the DNA strands. Then UvrB probes one DNA strand for the presence of a lesion. If a lesion is found the UvrA subunits dissociate and the UvrB-DNA preincision complex is formed. This complex is subsequently bound by UvrC and the second UvrB is released. If no lesion is found, the DNA wraps around the other UvrB subunit that will check the other stand for damage. The polypeptide is UvrABC system protein B (Treponema pallidum (strain Nichols)).